The sequence spans 63 residues: MRIHYLLFSFLLVLLSPLSAFSKKVYNAVSCMTNGGICWLKCSGTFREIGSCGTRQLKCCKKK.

Residues 1-20 (MRIHYLLFSFLLVLLSPLSA) form the signal peptide. A propeptide spanning residues 21–22 (FS) is cleaved from the precursor. 3 cysteine pairs are disulfide-bonded: Cys-31–Cys-59, Cys-38–Cys-52, and Cys-42–Cys-60.

Belongs to the beta-defensin family.

The protein resides in the secreted. Functionally, has bactericidal activity. The protein is Beta-defensin 3 (Defb3) of Rattus norvegicus (Rat).